The sequence spans 275 residues: Large ribosomal subunit protein uL2 (275 aa).

Over residues 28–38 (EPYAPLLDKKS) the composition is skewed to basic and acidic residues. Disordered regions lie at residues 28–55 (EPYAPLLDKKSKSGGRNNTGRITTRHVG) and 224–258 (AMNPVDHPHGGGEGRTSGGRHPVSPWGIPTKGYKT).

The protein belongs to the universal ribosomal protein uL2 family. As to quaternary structure, part of the 50S ribosomal subunit. Forms a bridge to the 30S subunit in the 70S ribosome.

One of the primary rRNA binding proteins. Required for association of the 30S and 50S subunits to form the 70S ribosome, for tRNA binding and peptide bond formation. It has been suggested to have peptidyltransferase activity; this is somewhat controversial. Makes several contacts with the 16S rRNA in the 70S ribosome. This chain is Large ribosomal subunit protein uL2, found in Cellvibrio japonicus (strain Ueda107) (Pseudomonas fluorescens subsp. cellulosa).